Consider the following 654-residue polypeptide: DNA ligase (654 aa).

Residues Asp32 to Asp36 and Ser81 to Leu82 each bind NAD(+). Residue Lys112 is the N6-AMP-lysine intermediate of the active site. NAD(+) contacts are provided by Arg133, Glu167, and Lys306. Cys400, Cys403, Cys416, and Cys421 together coordinate Zn(2+). A BRCT domain is found at Glu577–Glu654.

The protein belongs to the NAD-dependent DNA ligase family. LigA subfamily. Mg(2+) is required as a cofactor. The cofactor is Mn(2+).

The enzyme catalyses NAD(+) + (deoxyribonucleotide)n-3'-hydroxyl + 5'-phospho-(deoxyribonucleotide)m = (deoxyribonucleotide)n+m + AMP + beta-nicotinamide D-nucleotide.. DNA ligase that catalyzes the formation of phosphodiester linkages between 5'-phosphoryl and 3'-hydroxyl groups in double-stranded DNA using NAD as a coenzyme and as the energy source for the reaction. It is essential for DNA replication and repair of damaged DNA. This is DNA ligase from Helicobacter acinonychis (strain Sheeba).